We begin with the raw amino-acid sequence, 1157 residues long: Zinc finger protein 516 (1157 aa).

A compositionally biased stretch (basic and acidic residues) spans M1 to R13. The disordered stretch occupies residues M1–V26. The segment at M1–A420 is mediates promoter DNA-binding and activation of transcription. 7 consecutive C2H2-type zinc fingers follow at residues H34–H56, Y62–H84, V162–H185, F188–H211, F236–H258, H264–H286, and E323–H345. The span at S449 to D458 shows a compositional bias: basic and acidic residues. Disordered stretches follow at residues S449–S503 and S523–E653. Residues A494 to S503 show a composition bias toward polar residues. The segment at S504–H526 adopts a C2H2-type 8 zinc-finger fold. Residues R531–A541 are compositionally biased toward basic and acidic residues. The span at E550–G561 shows a compositional bias: polar residues. A compositionally biased stretch (acidic residues) spans E575 to V585. Residues G601–D612 are compositionally biased toward polar residues. K630 participates in a covalent cross-link: Glycyl lysine isopeptide (Lys-Gly) (interchain with G-Cter in SUMO2). Residues S644 to E653 show a composition bias toward basic and acidic residues. A Glycyl lysine isopeptide (Lys-Gly) (interchain with G-Cter in SUMO2) cross-link involves residue K669. A C2H2-type 9; atypical zinc finger spans residues H753 to H776. Disordered regions lie at residues T831–V996 and R1013–Q1040. Polar residues predominate over residues G914–V928. Residues K1032 and K1051 each participate in a glycyl lysine isopeptide (Lys-Gly) (interchain with G-Cter in SUMO2) cross-link. A C2H2-type 10 zinc finger spans residues F1092–H1114. Positions P1123–I1157 are disordered.

This sequence belongs to the krueppel C2H2-type zinc-finger protein family. As to quaternary structure, interacts with PRDM16; the interaction is direct and may play a role in the transcription of brown adipose tissue-specific genes. Interacts with PWWP2B. Interacts with HDAC1; this interaction is enhanced in the presence of PWWP2B. Expressed by adipocytes more specifically in brown adipose tissue compared to white adipose tissue (WAT).

The protein resides in the nucleus. Its function is as follows. Transcriptional regulator that binds to the promoter and activates the transcription of genes promoting brown adipose tissue (BAT) differentiation. Among brown adipose tissue-specific genes, binds the proximal region of the promoter of the UCP1 gene to activate its transcription and thereby regulate thermogenesis. May also play a role in the cellular response to replication stress. The protein is Zinc finger protein 516 of Mus musculus (Mouse).